Reading from the N-terminus, the 290-residue chain is 33 kDa chaperonin (290 aa).

2 cysteine pairs are disulfide-bonded: C235/C237 and C268/C271.

It belongs to the HSP33 family. Under oxidizing conditions two disulfide bonds are formed involving the reactive cysteines. Under reducing conditions zinc is bound to the reactive cysteines and the protein is inactive.

The protein localises to the cytoplasm. In terms of biological role, redox regulated molecular chaperone. Protects both thermally unfolding and oxidatively damaged proteins from irreversible aggregation. Plays an important role in the bacterial defense system toward oxidative stress. This Streptococcus pyogenes serotype M6 (strain ATCC BAA-946 / MGAS10394) protein is 33 kDa chaperonin.